Here is a 557-residue protein sequence, read N- to C-terminus: Potassium-transporting ATPase potassium-binding subunit (557 aa).

12 helical membrane-spanning segments follow: residues 5-25, 63-83, 132-152, 170-190, 253-273, 283-303, 329-349, 356-376, 379-399, 416-436, 484-504, and 526-546; these read GFLLIATFLLVLMVLARPLGS, LSAILGLNILGLAVLFFMLLG, GLTVQNFLSAASGIAVIFALI, LLRITLWVLTPVALLIALFFI, FVQMLAIFLIPTALCFAFGEV, LLWAMSVIFVICVGVVMWAEV, VLVSSLFAVVTTAASCGAVIA, ALGGMVPMWLMQIGEVVFGGV, GLYGMMLFVLLAVFIAGLMIG, LTALAILVTPTLVLMGAALAM, LLALCMFVGRFGVIIPVMAIA, and LFVGLLIGTVLLVGALTFIPA.

It belongs to the KdpA family. As to quaternary structure, the system is composed of three essential subunits: KdpA, KdpB and KdpC.

It localises to the cell inner membrane. Part of the high-affinity ATP-driven potassium transport (or Kdp) system, which catalyzes the hydrolysis of ATP coupled with the electrogenic transport of potassium into the cytoplasm. This subunit binds the periplasmic potassium ions and delivers the ions to the membrane domain of KdpB through an intramembrane tunnel. This chain is Potassium-transporting ATPase potassium-binding subunit, found in Escherichia coli O6:K15:H31 (strain 536 / UPEC).